The primary structure comprises 198 residues: Ribonuclease HII (198 aa).

The RNase H type-2 domain maps to 11–198 (ELIAGVDEVG…SPVRKLLENE (188 aa)). Residues aspartate 17, glutamate 18, and aspartate 109 each contribute to the a divalent metal cation site.

Belongs to the RNase HII family. The cofactor is Mn(2+). Requires Mg(2+) as cofactor.

It is found in the cytoplasm. The enzyme catalyses Endonucleolytic cleavage to 5'-phosphomonoester.. Endonuclease that specifically degrades the RNA of RNA-DNA hybrids. The chain is Ribonuclease HII from Mannheimia succiniciproducens (strain KCTC 0769BP / MBEL55E).